A 247-amino-acid polypeptide reads, in one-letter code: RNA polymerase sigma factor FliA (247 aa).

Positions 22–94 (LIQRYAPLVK…MLDEVRKGDW (73 aa)) are sigma-70 factor domain-2. Residues 49-52 (DLMQ) carry the Interaction with polymerase core subunit RpoC motif. Residues 102 to 171 (NTRMVTDAIR…GLPEDTSLSH (70 aa)) are sigma-70 factor domain-3. A sigma-70 factor domain-4 region spans residues 190–238 (AIAKLPERERLVLALYYDEELNLKEIGEVLGVSESRVSQLHSQCAARLR). The segment at residues 212–231 (LKEIGEVLGVSESRVSQLHS) is a DNA-binding region (H-T-H motif).

It belongs to the sigma-70 factor family. FliA subfamily.

The protein localises to the cytoplasm. Its function is as follows. Sigma factors are initiation factors that promote the attachment of RNA polymerase to specific initiation sites and are then released. This sigma factor controls the expression of flagella-related genes. Required for the flagellin gene (fliC) expression. This Pseudomonas aeruginosa (strain ATCC 15692 / DSM 22644 / CIP 104116 / JCM 14847 / LMG 12228 / 1C / PRS 101 / PAO1) protein is RNA polymerase sigma factor FliA.